The following is a 68-amino-acid chain: DNA-directed RNA polymerase subunit Rpo10 (68 aa).

The Zn(2+) site is built by Cys7, Cys10, Cys44, and Cys45.

Belongs to the archaeal Rpo10/eukaryotic RPB10 RNA polymerase subunit family. In terms of assembly, part of the RNA polymerase complex. The cofactor is Zn(2+).

The protein resides in the cytoplasm. It catalyses the reaction RNA(n) + a ribonucleoside 5'-triphosphate = RNA(n+1) + diphosphate. In terms of biological role, DNA-dependent RNA polymerase (RNAP) catalyzes the transcription of DNA into RNA using the four ribonucleoside triphosphates as substrates. This chain is DNA-directed RNA polymerase subunit Rpo10, found in Methanococcus vannielii (strain ATCC 35089 / DSM 1224 / JCM 13029 / OCM 148 / SB).